Consider the following 1284-residue polypeptide: Integrator complex subunit 6 (1284 aa).

The VWFA domain occupies 3–134; it reads IILFLVDTSS…PSVIIVITDG (132 aa). Disordered regions lie at residues 653-824, 864-895, 1053-1086, and 1125-1180; these read DVAP…GMSN, ETGETEAVPGGASLPGASSANEPSSIGASPAV, TSSGSSVGAGASNSNLNGNGSTESGGGVSSDDHA, and NNSS…PGQS. Over residues 690–721 the composition is skewed to gly residues; that stretch reads SPGGGSGPGMPGMPGMGGGMSGLMLGAGGSGG. Low complexity-rich tracts occupy residues 752-781 and 803-824; these read DSRSSSSGSESSTTGSAPGSPIPGATSSIS and NSNSSFVSSTSEASASDSGMSN. Polar residues predominate over residues 879 to 890; that stretch reads GASSANEPSSIG. Composition is skewed to low complexity over residues 1053–1074 and 1125–1141; these read TSSGSSVGAGASNSNLNGNGST and NNSSAAGAASGSTLSNN. The span at 1159–1171 shows a compositional bias: polar residues; that stretch reads INSSCGSSPTHNN.

It belongs to the Integrator subunit 6 family. In terms of assembly, belongs to the multiprotein complex Integrator, at least composed of IntS1, IntS2, IntS3, IntS4, omd/IntS5, IntS6, defl/IntS7, IntS8, IntS9, IntS10, IntS11, IntS12, asun/IntS13, IntS14 and IntS15. The core complex associates with protein phosphatase 2A subunits mts/PP2A and Pp2A-29B, to form the Integrator-PP2A (INTAC) complex.

It is found in the nucleus. In terms of biological role, component of the integrator complex, a multiprotein complex that terminates RNA polymerase II (Pol II) transcription in the promoter-proximal region of genes. The integrator complex provides a quality checkpoint during transcription elongation by driving premature transcription termination of transcripts that are unfavorably configured for transcriptional elongation: the complex terminates transcription by (1) catalyzing dephosphorylation of the C-terminal domain (CTD) of Pol II subunit Polr2A/Rbp1 and Spt5, and (2) degrading the exiting nascent RNA transcript via endonuclease activity. The integrator complex is also involved in the 3'-end processing of the U7 snRNA, and also the spliceosomal snRNAs U1, U2, U4 and U5. Within the integrator complex, IntS6 acts as a substrate adapter for protein phosphatase 2A (PP2A). The chain is Integrator complex subunit 6 from Drosophila melanogaster (Fruit fly).